Reading from the N-terminus, the 124-residue chain is Fluoride-specific ion channel FluC (124 aa).

The next 4 helical transmembrane spans lie at 3-23, 34-54, 68-88, and 100-120; these read VLLI…VSNL, IGTL…FIFI, LLLI…IETF, and ALNV…GVLI. Residues G75 and T78 each contribute to the Na(+) site.

It belongs to the fluoride channel Fluc/FEX (TC 1.A.43) family.

The protein localises to the cell inner membrane. It carries out the reaction fluoride(in) = fluoride(out). Its activity is regulated as follows. Na(+) is not transported, but it plays an essential structural role and its presence is essential for fluoride channel function. In terms of biological role, fluoride-specific ion channel. Important for reducing fluoride concentration in the cell, thus reducing its toxicity. The polypeptide is Fluoride-specific ion channel FluC (Coxiella burnetii (strain CbuK_Q154) (Coxiella burnetii (strain Q154))).